We begin with the raw amino-acid sequence, 362 residues long: Resuscitation-promoting factor RpfB (362 aa).

Residues 1-22 (MLRGVVGAFLVSLTVAGSYAVA) form the signal peptide. One can recognise a G5 domain in the interval 192–272 (VTRMRIEKVT…NGVLRVGAKP (81 aa)).

The protein belongs to the transglycosylase family. Rpf subfamily.

Functionally, factor that stimulates resuscitation of dormant cells. Has peptidoglycan (PG) hydrolytic activity. Active in the pM concentration range. Has little to no effect on actively-growing cells. PG fragments could either directly activate the resuscitation pathway of dormant bacteria or serve as a substrate for endogenous Rpf, resulting in low molecular weight products with resuscitation activity. The polypeptide is Resuscitation-promoting factor RpfB (rpfB) (Mycolicibacterium smegmatis (strain ATCC 700084 / mc(2)155) (Mycobacterium smegmatis)).